Here is a 140-residue protein sequence, read N- to C-terminus: ATP synthase epsilon chain (140 aa).

Belongs to the ATPase epsilon chain family. In terms of assembly, F-type ATPases have 2 components, CF(1) - the catalytic core - and CF(0) - the membrane proton channel. CF(1) has five subunits: alpha(3), beta(3), gamma(1), delta(1), epsilon(1). CF(0) has three main subunits: a, b and c.

The protein resides in the cell inner membrane. Produces ATP from ADP in the presence of a proton gradient across the membrane. This is ATP synthase epsilon chain from Pseudoalteromonas translucida (strain TAC 125).